A 354-amino-acid chain; its full sequence is Protein-glutamate methylesterase/protein-glutamine glutaminase (354 aa).

The Response regulatory domain maps to 6–123 (RVLIVDDSAV…SQSLETLSAA (118 aa)). The residue at position 57 (Asp-57) is a 4-aspartylphosphate. One can recognise a CheB-type methylesterase domain in the interval 159–351 (ARTTHQLLAV…GDLLKQLQTR (193 aa)). Catalysis depends on residues Ser-171, His-197, and Asp-293.

It belongs to the CheB family. Post-translationally, phosphorylated by CheA. Phosphorylation of the N-terminal regulatory domain activates the methylesterase activity.

It localises to the cytoplasm. The catalysed reaction is [protein]-L-glutamate 5-O-methyl ester + H2O = L-glutamyl-[protein] + methanol + H(+). It carries out the reaction L-glutaminyl-[protein] + H2O = L-glutamyl-[protein] + NH4(+). In terms of biological role, involved in chemotaxis. Part of a chemotaxis signal transduction system that modulates chemotaxis in response to various stimuli. Catalyzes the demethylation of specific methylglutamate residues introduced into the chemoreceptors (methyl-accepting chemotaxis proteins or MCP) by CheR. Also mediates the irreversible deamidation of specific glutamine residues to glutamic acid. The polypeptide is Protein-glutamate methylesterase/protein-glutamine glutaminase (Bdellovibrio bacteriovorus (strain ATCC 15356 / DSM 50701 / NCIMB 9529 / HD100)).